A 629-amino-acid chain; its full sequence is Pentatricopeptide repeat-containing protein At1g63150 (629 aa).

PPR repeat units lie at residues 46–81 (ASGD…RPFP), 82–116 (SIVE…GISH), 117–151 (DLYT…GYEP), 152–186 (DIVT…GYKP), 187–221 (DTFT…GCQP), 222–256 (DLVT…RIKA), 257–291 (NVVI…GIRP), 292–326 (NVVT…KINP), 327–361 (NVVT…SIDP), 362–396 (DTIT…DCLP), 397–431 (NIQT…GLVG), 432–466 (NTVT…RVPT), 467–501 (DIMT…EMEL), 502–532 (NIFI…LSIK), 534–568 (DVVT…GTLP), and 569–603 (NSGT…GFVG).

Belongs to the PPR family. P subfamily.

The chain is Pentatricopeptide repeat-containing protein At1g63150 from Arabidopsis thaliana (Mouse-ear cress).